We begin with the raw amino-acid sequence, 225 residues long: Cytidylate kinase (225 aa).

Residue 12–20 (GPSGAGKGT) coordinates ATP.

It belongs to the cytidylate kinase family. Type 1 subfamily.

Its subcellular location is the cytoplasm. The catalysed reaction is CMP + ATP = CDP + ADP. It carries out the reaction dCMP + ATP = dCDP + ADP. The chain is Cytidylate kinase from Edwardsiella ictaluri (strain 93-146).